The sequence spans 485 residues: MNEYPKKRKRKTLHPSRYSDSSGISRIADGFNGIFSDHCYSVCSMRQPDLKYFDNKDDDSDTETSNELPKFTDGIKARNRNQNYLVPSPVLRILDHTAFPTEKSADIEICDEDCDSPESVHQQTQEESPIEVHTAEDVPIAAEVHAISEDYDIETENNSSESLQDQTDEEPPAKLCKIVDKSQALNVTAQQKWPLLRANSSGLYKCELCEFNSKYFSDLKQHMILKHKRTDSNVCRVCKESFSTNMLLIEHAKLHEEDPYICKYCDYKTVIFENLSQHIADTHFSDHLYWCEQCDVQFSSSSELYLHFQEHSCDEQYLCQFCEHETNDPEDLHSHVVNEHACKLIELSDKYNNGEHGQYSLLSKITFDKCKNFFVCQVCGFRSRLHTNVNRHVAIEHTKIFPHVCDDCGKGFSSMLEYCKHLNSHLSEGIYLCQYCEYSTGQIEDLKIHLDFKHSADLPHKCSDCLMRFGNERELISHLPVHETT.

Over residues 1–14 (MNEYPKKRKRKTLH) the composition is skewed to basic residues. Positions 1-20 (MNEYPKKRKRKTLHPSRYSD) are disordered. S60 is subject to Phosphoserine. A Glycyl lysine isopeptide (Lys-Gly) (interchain with G-Cter in SUMO2) cross-link involves residue K76. S88 is subject to Phosphoserine. Residues K177, K181, and K226 each participate in a glycyl lysine isopeptide (Lys-Gly) (interchain with G-Cter in SUMO2) cross-link. C2H2-type zinc fingers lie at residues 204–227 (YKCELCEFNSKYFSDLKQHMILKH), 233–255 (NVCRVCKESFSTNMLLIEHAKLH), 260–283 (YICKYCDYKTVIFENLSQHIADTH), 289–311 (YWCEQCDVQFSSSSELYLHFQEH), 374–397 (FVCQVCGFRSRLHTNVNRHVAIEH), 403–425 (HVCDDCGKGFSSMLEYCKHLNSH), 431–454 (YLCQYCEYSTGQIEDLKIHLDFKH), and 460–482 (HKCSDCLMRFGNERELISHLPVH). An interaction with CTNNA2 region spans residues 371 to 455 (KNFFVCQVCG…LKIHLDFKHS (85 aa)).

It belongs to the krueppel C2H2-type zinc-finger protein family. As to quaternary structure, interacts with CTNNA2.

It is found in the nucleus. Its function is as follows. Binds DNA and may function as a transcriptional repressor. The chain is Zinc finger protein 639 (ZNF639) from Bos taurus (Bovine).